A 407-amino-acid chain; its full sequence is uncharacterized protein (407 aa).

2 disordered regions span residues 1–62 and 350–379; these read MTGR…NGDP and SVTPAAAAPPGVPKPEHGEELEADPWKPSS. The segment covering 17–30 has biased composition (basic and acidic residues); the sequence is PVEKMPRFQREHGA.

This is an uncharacterized protein from Ictaluridae (bullhead catfishes).